A 428-amino-acid polypeptide reads, in one-letter code: Diaminopimelate decarboxylase (428 aa).

Lys64 bears the N6-(pyridoxal phosphate)lysine mark. Pyridoxal 5'-phosphate is bound by residues Gly239 and 281–284 (EPGR). Substrate is bound by residues Arg284, Arg319, and Tyr323. Cys350 serves as the catalytic Proton donor. Residues Glu351 and Tyr379 each coordinate substrate. A pyridoxal 5'-phosphate-binding site is contributed by Tyr379.

It belongs to the Orn/Lys/Arg decarboxylase class-II family. LysA subfamily. In terms of assembly, homodimer. Pyridoxal 5'-phosphate serves as cofactor.

It carries out the reaction meso-2,6-diaminopimelate + H(+) = L-lysine + CO2. It functions in the pathway amino-acid biosynthesis; L-lysine biosynthesis via DAP pathway; L-lysine from DL-2,6-diaminopimelate: step 1/1. Its function is as follows. Specifically catalyzes the decarboxylation of meso-diaminopimelate (meso-DAP) to L-lysine. This Methanothermobacter thermautotrophicus (strain ATCC 29096 / DSM 1053 / JCM 10044 / NBRC 100330 / Delta H) (Methanobacterium thermoautotrophicum) protein is Diaminopimelate decarboxylase.